The primary structure comprises 250 residues: 5-oxoprolinase subunit A (250 aa).

This sequence belongs to the LamB/PxpA family. In terms of assembly, forms a complex composed of PxpA, PxpB and PxpC.

It carries out the reaction 5-oxo-L-proline + ATP + 2 H2O = L-glutamate + ADP + phosphate + H(+). Catalyzes the cleavage of 5-oxoproline to form L-glutamate coupled to the hydrolysis of ATP to ADP and inorganic phosphate. In Streptomyces griseus subsp. griseus (strain JCM 4626 / CBS 651.72 / NBRC 13350 / KCC S-0626 / ISP 5235), this protein is 5-oxoprolinase subunit A.